Consider the following 454-residue polypeptide: uncharacterized protein (454 aa).

The interval 1–25 (MHGPTSKAISRNVRSVKRPRRAPRP) is disordered. The segment covering 14–23 (RSVKRPRRAP) has biased composition (basic residues).

The protein resides in the cytoplasm. It is found in the nucleus. This is an uncharacterized protein from Saccharomyces cerevisiae (strain ATCC 204508 / S288c) (Baker's yeast).